We begin with the raw amino-acid sequence, 778 residues long: Protein SPT2 homolog (778 aa).

3 disordered regions span residues 1 to 21 (MDFH…GIAK), 50 to 625 (KKDE…AKPK), and 639 to 685 (VPKS…DDDD). Residues 1-665 (MDFHSVLKMA…PGHRPAMRPP (665 aa)) form an important for interaction with DNA region. Positions 44–83 (VQAFLRKKDEESRRKETVEKRKKEDLLAKRKELKHDRKAR) form a coiled coil. Residues 50 to 78 (KKDEESRRKETVEKRKKEDLLAKRKELKH) show a composition bias toward basic and acidic residues. A compositionally biased stretch (acidic residues) spans 114 to 135 (EEDQNDNMAAEGEEYMTEEELY). Over residues 153 to 167 (QKVPKPAPGKKPPTP) the composition is skewed to pro residues. A compositionally biased stretch (basic and acidic residues) spans 190 to 227 (RPVKKEERLRTAEELKELEFLERKAQKADRKDPKRNEQ). Residues 193 to 221 (KKEERLRTAEELKELEFLERKAQKADRKD) are a coiled coil. Over residues 242 to 269 (LKGTHSGNSKSSSTEQNGTIRKSSSDTG) the composition is skewed to polar residues. Residues 270-286 (SRTEKSGSVFHTKESKK) show a composition bias toward basic and acidic residues. Low complexity predominate over residues 312-335 (SSQPSAASNSAFGRPSGSARPSGS). Gly residues-rich tracts occupy residues 336–357 (SGPG…GGSA) and 365–384 (GGSG…GKPI). Residues 385–394 (GGLHSSHGSG) show a composition bias toward low complexity. The span at 395-417 (KPTGGTGSGSGKPTGASGSGSGK) shows a compositional bias: gly residues. Composition is skewed to low complexity over residues 418–493 (PTGS…SGSA) and 506–559 (GSGS…PSSS). Positions 588–604 (VRPNSTSVPGSARSSLG) are enriched in polar residues. The segment covering 662–671 (MRPPGPPLPP) has biased composition (pro residues). Residues 666-778 (GPPLPPITSS…QLKAAKKMSR (113 aa)) are important for interaction with histones. Positions 735-778 (REQQKEEARSLRLGIQEDLEELQREEEELKRKAKQLKAAKKMSR) form a coiled coil.

The protein belongs to the SPT2 family. As to quaternary structure, interacts with histones. Interacts with a heterotetrameric complex formed by histone H3 and H4, especially when the histone tetramer is not bound to DNA.

Its subcellular location is the nucleus. It localises to the nucleolus. Its function is as follows. Histone chaperone that stabilizes pre-existing histone tetramers and regulates replication-independent histone exchange on chromatin. Required for normal chromatin refolding in the coding region of transcribed genes, and for the suppression of spurious transcription. Binds DNA and histones and promotes nucleosome assembly (in vitro). Facilitates formation of tetrameric histone complexes containing histone H3 and H4. Modulates RNA polymerase 1-mediated transcription. Binds DNA, with a preference for branched DNA species, such as Y-form DNA and Holliday junction DNA. The chain is Protein SPT2 homolog (spty2d1) from Xenopus tropicalis (Western clawed frog).